The primary structure comprises 455 residues: Fumarate hydratase class II (455 aa).

Substrate-binding positions include 96-98 (SGT), 122-125 (HPND), 132-134 (SSN), and threonine 180. Histidine 181 serves as the catalytic Proton donor/acceptor. Serine 311 is an active-site residue. Residues serine 312 and 317-319 (KVN) contribute to the substrate site.

It belongs to the class-II fumarase/aspartase family. Fumarase subfamily. Homotetramer.

It localises to the cytoplasm. The catalysed reaction is (S)-malate = fumarate + H2O. It functions in the pathway carbohydrate metabolism; tricarboxylic acid cycle; (S)-malate from fumarate: step 1/1. Involved in the TCA cycle. Catalyzes the stereospecific interconversion of fumarate to L-malate. This is Fumarate hydratase class II from Listeria monocytogenes serovar 1/2a (strain ATCC BAA-679 / EGD-e).